Reading from the N-terminus, the 235-residue chain is Adenosine 5'-phosphosulfate reductase (235 aa).

[4Fe-4S] cluster-binding residues include Cys-121, Cys-122, Cys-204, and Cys-207. Cys-230 acts as the Nucleophile; cysteine thiosulfonate intermediate in catalysis.

Belongs to the PAPS reductase family. CysH subfamily. [4Fe-4S] cluster serves as cofactor.

Its subcellular location is the cytoplasm. The catalysed reaction is [thioredoxin]-disulfide + sulfite + AMP + 2 H(+) = adenosine 5'-phosphosulfate + [thioredoxin]-dithiol. Its pathway is sulfur metabolism; hydrogen sulfide biosynthesis; sulfite from sulfate. Its function is as follows. Catalyzes the formation of sulfite from adenosine 5'-phosphosulfate (APS) using thioredoxin as an electron donor. This chain is Adenosine 5'-phosphosulfate reductase, found in Geobacillus sp. (strain WCH70).